The primary structure comprises 214 residues: ATP phosphoribosyltransferase (214 aa).

This sequence belongs to the ATP phosphoribosyltransferase family. Short subfamily. Heteromultimer composed of HisG and HisZ subunits.

Its subcellular location is the cytoplasm. The enzyme catalyses 1-(5-phospho-beta-D-ribosyl)-ATP + diphosphate = 5-phospho-alpha-D-ribose 1-diphosphate + ATP. It functions in the pathway amino-acid biosynthesis; L-histidine biosynthesis; L-histidine from 5-phospho-alpha-D-ribose 1-diphosphate: step 1/9. In terms of biological role, catalyzes the condensation of ATP and 5-phosphoribose 1-diphosphate to form N'-(5'-phosphoribosyl)-ATP (PR-ATP). Has a crucial role in the pathway because the rate of histidine biosynthesis seems to be controlled primarily by regulation of HisG enzymatic activity. This Aquifex aeolicus (strain VF5) protein is ATP phosphoribosyltransferase (hisG).